Here is a 125-residue protein sequence, read N- to C-terminus: Small ribosomal subunit protein uS13 (125 aa).

Positions 94–125 are disordered; the sequence is SLPVRGQRTRTNARTRKGKRKTVAGKKKAVKK.

This sequence belongs to the universal ribosomal protein uS13 family. Part of the 30S ribosomal subunit. Forms a loose heterodimer with protein S19. Forms two bridges to the 50S subunit in the 70S ribosome.

Located at the top of the head of the 30S subunit, it contacts several helices of the 16S rRNA. In the 70S ribosome it contacts the 23S rRNA (bridge B1a) and protein L5 of the 50S subunit (bridge B1b), connecting the 2 subunits; these bridges are implicated in subunit movement. Contacts the tRNAs in the A and P-sites. The sequence is that of Small ribosomal subunit protein uS13 from Chlorobium chlorochromatii (strain CaD3).